Here is a 379-residue protein sequence, read N- to C-terminus: D-threonine aldolase (379 aa).

K59 carries the N6-(pyridoxal phosphate)lysine modification.

This sequence belongs to the DSD1 family. Requires pyridoxal 5'-phosphate as cofactor. Mn(2+) serves as cofactor. It depends on Co(2+) as a cofactor. Ni(2+) is required as a cofactor. The cofactor is Mg(2+).

It catalyses the reaction D-threonine = acetaldehyde + glycine. The catalysed reaction is D-allo-threonine = acetaldehyde + glycine. With respect to regulation, inhibited by the carbonyl reagents hydroxylamine, phenylhydrazine and semicarbazide. Inhibited by the chelating agent EDTA. Inhibited by the sulfhydryl reagent p-chloromercuribenzoic acid, and by sodium cyanide. Inhibited by iodoacetate, Ag(2)SO(4), HgCl(2) and CdCl(2). Competitively inhibited by beta-hydroxyaspartate and O-phospho-DL-threonine. In terms of biological role, catalyzes the reversible cleavage of D-threonine or D-allothreonine into glycine and acetaldehyde. Can also cleave D-beta-phenylserine, D-beta-hydroxy-alpha-aminovaleric acid, D-beta-3,4-dihydroxyphenylserine and D-beta-3,4-methylenedioxyphenylserine into glycine and the corresponding aldehyde compounds. Inactive towards D-serine, beta-hydroxyaspartate and O-phospho-DL-threonine. The chain is D-threonine aldolase from Arthrobacter sp.